The primary structure comprises 79 residues: Endothelin-2 (79 aa).

Residues 1–23 (PEQTAPYGLGNPPRRRRRSLPRR) are disordered. An endothelin-like region spans residues 24–39 (CQCSSARDPSCATFCL). A disordered region spans residues 51–79 (SRKSPADVFQTGKTGATRGELLQRLRDIS).

The protein belongs to the endothelin/sarafotoxin family.

The protein resides in the secreted. Endothelins are endothelium-derived vasoconstrictor peptides. This chain is Endothelin-2 (EDN2), found in Macaca fascicularis (Crab-eating macaque).